The following is an 87-amino-acid chain: U14-lycotoxin-Ls1a (87 aa).

Residues 1 to 20 (MNSKVFAALLLLALSTCVLS) form the signal peptide. The 46-residue stretch at 21-66 (EKYCPTPRNTSCKKMNIRNNCCRDSDCTSNAFCCAEPCGNFCHKAS) folds into the WAP domain. Cystine bridges form between C24/C54, C32/C58, C41/C53, C42/C80, and C47/C62.

The protein belongs to the venom protein 11 family. 01 (wap-1) subfamily. Contains 5 disulfide bonds. In terms of tissue distribution, expressed by the venom gland.

It is found in the secreted. Its function is as follows. Has antibacterial activity. The polypeptide is U14-lycotoxin-Ls1a (Lycosa singoriensis (Wolf spider)).